The chain runs to 689 residues: UvrABC system protein B (689 aa).

Residues 1 to 26 (MSDASGPLQPDRPEADVPFRVEAPFD) form a disordered region. In terms of domain architecture, Helicase ATP-binding spans 40-422 (AGYEQGAQQQ…ERAQSANVVE (383 aa)). 53–60 (GVTGSGKT) is an ATP binding site. The Beta-hairpin signature appears at 106–129 (YYNYYQPEAYVEQTDKYIEKDASI). The 163-residue stretch at 443–605 (QVEDLMDRID…TTPTTIEKAV (163 aa)) folds into the Helicase C-terminal domain. One can recognise a UVR domain in the interval 632–667 (ALLVEDLEARMEDAASNLEFELAADIRDRMRELREA). Residues 668-689 (FDLDGGDAPEDPGGVAPETEDW) are disordered.

This sequence belongs to the UvrB family. Forms a heterotetramer with UvrA during the search for lesions. Interacts with UvrC in an incision complex.

It is found in the cytoplasm. Functionally, the UvrABC repair system catalyzes the recognition and processing of DNA lesions. A damage recognition complex composed of 2 UvrA and 2 UvrB subunits scans DNA for abnormalities. Upon binding of the UvrA(2)B(2) complex to a putative damaged site, the DNA wraps around one UvrB monomer. DNA wrap is dependent on ATP binding by UvrB and probably causes local melting of the DNA helix, facilitating insertion of UvrB beta-hairpin between the DNA strands. Then UvrB probes one DNA strand for the presence of a lesion. If a lesion is found the UvrA subunits dissociate and the UvrB-DNA preincision complex is formed. This complex is subsequently bound by UvrC and the second UvrB is released. If no lesion is found, the DNA wraps around the other UvrB subunit that will check the other stand for damage. This chain is UvrABC system protein B, found in Halobacterium salinarum (strain ATCC 700922 / JCM 11081 / NRC-1) (Halobacterium halobium).